The following is a 100-amino-acid chain: Integration host factor subunit alpha 2 (100 aa).

It belongs to the bacterial histone-like protein family. As to quaternary structure, heterodimer of an alpha and a beta chain.

This protein is one of the two subunits of integration host factor, a specific DNA-binding protein that functions in genetic recombination as well as in transcriptional and translational control. This Dechloromonas aromatica (strain RCB) protein is Integration host factor subunit alpha 2.